Consider the following 625-residue polypeptide: tRNA uridine 5-carboxymethylaminomethyl modification enzyme MnmG (625 aa).

Residues 10 to 15, Val-122, and Ser-177 contribute to the FAD site; that span reads GGGHAG. Residue 271 to 285 coordinates NAD(+); that stretch reads GPRYCPSIEDKVNRF. Gln-368 provides a ligand contact to FAD.

Belongs to the MnmG family. Homodimer. Heterotetramer of two MnmE and two MnmG subunits. The cofactor is FAD.

It is found in the cytoplasm. NAD-binding protein involved in the addition of a carboxymethylaminomethyl (cmnm) group at the wobble position (U34) of certain tRNAs, forming tRNA-cmnm(5)s(2)U34. The polypeptide is tRNA uridine 5-carboxymethylaminomethyl modification enzyme MnmG (Wolinella succinogenes (strain ATCC 29543 / DSM 1740 / CCUG 13145 / JCM 31913 / LMG 7466 / NCTC 11488 / FDC 602W) (Vibrio succinogenes)).